The following is a 107-amino-acid chain: Phosphoribosyl-ATP pyrophosphatase (107 aa).

It belongs to the PRA-PH family.

Its subcellular location is the cytoplasm. It catalyses the reaction 1-(5-phospho-beta-D-ribosyl)-ATP + H2O = 1-(5-phospho-beta-D-ribosyl)-5'-AMP + diphosphate + H(+). It participates in amino-acid biosynthesis; L-histidine biosynthesis; L-histidine from 5-phospho-alpha-D-ribose 1-diphosphate: step 2/9. The protein is Phosphoribosyl-ATP pyrophosphatase of Novosphingobium aromaticivorans (strain ATCC 700278 / DSM 12444 / CCUG 56034 / CIP 105152 / NBRC 16084 / F199).